The primary structure comprises 278 residues: MAATGEALTPQGYIQHHLTNLQVCATDNGLAVNHACEKAGFWTWHIDSLFFSVGLGVLFLWIFRSVGKKATSGVPGKLQCFVEMIVEFVNNSVKESFHGRNALIAPLALTIFVWVFMMNFMDMIPVDWLPHAASLMGIPYLKAVPTTDVNITFSLAIGVFLLIIFYSIKVKGVSGFVKELTLQPFNHKAMIPVNLLLETVTLIAKPISLALRLFGNLYAGELIFILIALMYGTNLLLSTLGVTLQLGWLIFHILVITLQAFIFMMLTIVYLSMAHEDH.

Transmembrane regions (helical) follow at residues 43-63 (TWHI…LWIF), 104-124 (IAPL…MDMI), 148-168 (DVNI…FYSI), 191-211 (IPVN…SLAL), 222-242 (LIFI…TLGV), and 249-269 (LIFH…LTIV).

It belongs to the ATPase A chain family. As to quaternary structure, F-type ATPases have 2 components, CF(1) - the catalytic core - and CF(0) - the membrane proton channel. CF(1) has five subunits: alpha(3), beta(3), gamma(1), delta(1), epsilon(1). CF(0) has three main subunits: a(1), b(2) and c(9-12). The alpha and beta chains form an alternating ring which encloses part of the gamma chain. CF(1) is attached to CF(0) by a central stalk formed by the gamma and epsilon chains, while a peripheral stalk is formed by the delta and b chains.

It localises to the cell inner membrane. Its function is as follows. Key component of the proton channel; it plays a direct role in the translocation of protons across the membrane. This Shewanella baltica (strain OS185) protein is ATP synthase subunit a.